The chain runs to 65 residues: Large ribosomal subunit protein bL35 (65 aa).

A disordered region spans residues 23–44; sequence KRMKAGKQHILTKKSQKTKRNL.

The protein belongs to the bacterial ribosomal protein bL35 family.

The sequence is that of Large ribosomal subunit protein bL35 from Lachnoclostridium phytofermentans (strain ATCC 700394 / DSM 18823 / ISDg) (Clostridium phytofermentans).